Here is a 510-residue protein sequence, read N- to C-terminus: Inositol-3-phosphate synthase (510 aa).

NAD(+)-binding residues include glycine 70, glycine 71, asparagine 72, asparagine 73, aspartate 143, isoleucine 180, glutamine 190, arginine 193, threonine 230, alanine 231, asparagine 232, threonine 233, glycine 281, serine 282, aspartate 306, serine 309, asparagine 340, asparagine 341, aspartate 342, lysine 355, glycine 393, aspartate 394, aspartate 422, and serine 423.

The protein belongs to the myo-inositol 1-phosphate synthase family. NAD(+) is required as a cofactor.

It localises to the cytoplasm. The protein localises to the cytosol. The protein resides in the nucleus. It carries out the reaction D-glucose 6-phosphate = 1D-myo-inositol 3-phosphate. Its pathway is polyol metabolism; myo-inositol biosynthesis; myo-inositol from D-glucose 6-phosphate: step 1/2. Its function is as follows. Key enzyme in myo-inositol biosynthesis pathway that catalyzes the conversion of glucose 6-phosphate to 1-myo-inositol 1-phosphate in a NAD-dependent manner. The protein is Inositol-3-phosphate synthase of Nicotiana tabacum (Common tobacco).